Consider the following 361-residue polypeptide: N-methyltransferase benX (361 aa).

The protein belongs to the methyltransferase superfamily.

It participates in secondary metabolite biosynthesis. In terms of biological role, N-methyltransferase; part of the gene cluster that mediates the biosynthesis of benzomalvin A and D. The pathway begins with the loading of amino acid precursors onto the A domains of the non ribosomal peptide synthetases benY and benZ. BenY and the A1 domain of benZ are loaded with anthranilate (Anth), while the A2 domain of benZ is loaded with phenylalanine (Phe). N-methylation of Phe by the methyltransferase benX may happen before loading of Phe onto benZ, after loading of Phe, or after dipeptide formation. Condensation of Anth with the secondary amine of NmPhe or Phe is catalyzed by the C1 domain of benZ, forming a dipeptide intermediate. This is followed by in trans condensation of the Anth-NmPhe dipeptide with Anth bound to the T domain of benY by the C2 domain of benZ to form the linear tripeptide Anth-NmPhe-Anth. Cyclization and release of the tripeptide is then catalyzed by the C-terminal C domain of benY and the resulting 11-member macrocyclic intermediate is expected to spontaneously collapse to form the benzodiazepine core. Benzomalvin A is in conformational equilibrium with its atropisomer, benzomalvin D. The sequence is that of N-methyltransferase benX from Aspergillus terreus.